The following is a 111-amino-acid chain: uncharacterized protein (111 aa).

This is an uncharacterized protein from Aquifex aeolicus (strain VF5).